Consider the following 87-residue polypeptide: MAFKKKFAPRRKFCRFCADKELPIDYKRADILRDFITERGKIIARRITGTCAHHQRVLTREIKRARQMALLIYTATHSSDVKKKSIL.

It belongs to the bacterial ribosomal protein bS18 family. In terms of assembly, part of the 30S ribosomal subunit. Forms a tight heterodimer with protein bS6.

Its function is as follows. Binds as a heterodimer with protein bS6 to the central domain of the 16S rRNA, where it helps stabilize the platform of the 30S subunit. The polypeptide is Small ribosomal subunit protein bS18 (Nitratidesulfovibrio vulgaris (strain ATCC 29579 / DSM 644 / CCUG 34227 / NCIMB 8303 / VKM B-1760 / Hildenborough) (Desulfovibrio vulgaris)).